A 98-amino-acid polypeptide reads, in one-letter code: Large ribosomal subunit protein uL23 (98 aa).

The protein belongs to the universal ribosomal protein uL23 family. In terms of assembly, part of the 50S ribosomal subunit. Contacts protein L29, and trigger factor when it is bound to the ribosome.

Functionally, one of the early assembly proteins it binds 23S rRNA. One of the proteins that surrounds the polypeptide exit tunnel on the outside of the ribosome. Forms the main docking site for trigger factor binding to the ribosome. The polypeptide is Large ribosomal subunit protein uL23 (Legionella pneumophila (strain Paris)).